Reading from the N-terminus, the 258-residue chain is Imidazole glycerol phosphate synthase subunit HisF (258 aa).

Catalysis depends on residues D11 and D130.

Belongs to the HisA/HisF family. Heterodimer of HisH and HisF.

The protein resides in the cytoplasm. It carries out the reaction 5-[(5-phospho-1-deoxy-D-ribulos-1-ylimino)methylamino]-1-(5-phospho-beta-D-ribosyl)imidazole-4-carboxamide + L-glutamine = D-erythro-1-(imidazol-4-yl)glycerol 3-phosphate + 5-amino-1-(5-phospho-beta-D-ribosyl)imidazole-4-carboxamide + L-glutamate + H(+). It functions in the pathway amino-acid biosynthesis; L-histidine biosynthesis; L-histidine from 5-phospho-alpha-D-ribose 1-diphosphate: step 5/9. In terms of biological role, IGPS catalyzes the conversion of PRFAR and glutamine to IGP, AICAR and glutamate. The HisF subunit catalyzes the cyclization activity that produces IGP and AICAR from PRFAR using the ammonia provided by the HisH subunit. This is Imidazole glycerol phosphate synthase subunit HisF from Xanthomonas euvesicatoria pv. vesicatoria (strain 85-10) (Xanthomonas campestris pv. vesicatoria).